Consider the following 139-residue polypeptide: Autophagy-related protein 31 (139 aa).

Belongs to the ATG31 family. As to quaternary structure, forms a stable complex with ATG17 and ATG29. Interacts directly with ATG29. The ATG17-ATG29-ATG31 complex interacts with the ATG1-ATG13 complex. Note=The interaction with the ATG1-ATG13 complex is induced by starvation.

The protein resides in the preautophagosomal structure. Its function is as follows. Plays a role in starvation-induced autophagy. Involved in mitophagy. Functions with ATG17 and ATG29 at the preautophagosomal structure (PAS) in order to form normal autophagosomes under starvation conditions. This is Autophagy-related protein 31 from Kluyveromyces marxianus (strain DMKU3-1042 / BCC 29191 / NBRC 104275) (Yeast).